We begin with the raw amino-acid sequence, 138 residues long: Ribosomal RNA large subunit methyltransferase H (138 aa).

Residues glycine 86 and 105–110 (LSPLTF) contribute to the S-adenosyl-L-methionine site.

This sequence belongs to the RNA methyltransferase RlmH family. Homodimer.

It is found in the cytoplasm. It catalyses the reaction pseudouridine(1915) in 23S rRNA + S-adenosyl-L-methionine = N(3)-methylpseudouridine(1915) in 23S rRNA + S-adenosyl-L-homocysteine + H(+). Its function is as follows. Specifically methylates the pseudouridine at position 1915 (m3Psi1915) in 23S rRNA. This is Ribosomal RNA large subunit methyltransferase H from Prochlorococcus marinus (strain MIT 9215).